The primary structure comprises 287 residues: MLYLAKMRNAEGEFTENEQKIATFLLAHVGELKTVSSRNMAKQLEISQSSIVKFAQKLGANGFTELRMALIEEHSVSREKKRDKAVHLHSSITSEDSLEMMARKLNREKIVALEETYNLMDYERLEQVINLISKAPLIQITGVGGSALVGRDLSFKLMKIGFRVACEVDTHVQATIAQALRQGDVQIAISYSGSKKEIVLCAEAARKQGATVIAITSLADSPLRRLADYTLDTVSGETEWRSSSMSTRTAQNSVTDLLFVGMVQLNDVESLRMIERSSELITLLDRS.

The HTH rpiR-type domain occupies methionine 1–serine 77. The segment at residues serine 37–glutamine 56 is a DNA-binding region (H-T-H motif). The SIS domain occupies valine 128 to valine 268.

Homotetramer.

It functions in the pathway amino-sugar metabolism; N-acetylmuramate degradation [regulation]. Its function is as follows. Represses the expression of the murPQ operon involved in the uptake and degradation of N-acetylmuramic acid (MurNAc). Binds to two adjacent inverted repeats within the operator region. MurNAc 6-phosphate, the substrate of MurQ, is the specific inducer that weakens binding of MurR to the operator. This chain is HTH-type transcriptional regulator MurR, found in Salmonella arizonae (strain ATCC BAA-731 / CDC346-86 / RSK2980).